A 214-amino-acid polypeptide reads, in one-letter code: Adenylate kinase (214 aa).

G10–T15 contributes to the ATP binding site. Residues S30–V59 form an NMP region. AMP is bound by residues T31, R36, G57–V59, G85–R88, and Q92. Residues G126–D163 are LID. Position 127 (R127) interacts with ATP. Zn(2+) contacts are provided by C130 and C133. V136 to Y137 contributes to the ATP binding site. Residues C150 and D153 each contribute to the Zn(2+) site. R160 and R171 together coordinate AMP. An ATP-binding site is contributed by G199.

Belongs to the adenylate kinase family. As to quaternary structure, monomer.

It is found in the cytoplasm. The catalysed reaction is AMP + ATP = 2 ADP. Its pathway is purine metabolism; AMP biosynthesis via salvage pathway; AMP from ADP: step 1/1. In terms of biological role, catalyzes the reversible transfer of the terminal phosphate group between ATP and AMP. Plays an important role in cellular energy homeostasis and in adenine nucleotide metabolism. The polypeptide is Adenylate kinase (Anaeromyxobacter dehalogenans (strain 2CP-C)).